An 89-amino-acid chain; its full sequence is Small ribosomal subunit protein uS19 (89 aa).

It belongs to the universal ribosomal protein uS19 family.

Its function is as follows. Protein S19 forms a complex with S13 that binds strongly to the 16S ribosomal RNA. The protein is Small ribosomal subunit protein uS19 of Azobacteroides pseudotrichonymphae genomovar. CFP2.